Consider the following 350-residue polypeptide: Small ribosomal subunit biogenesis GTPase RsgA (350 aa).

The span at 1–17 (MSKNKLSKGQQRRVNAN) shows a compositional bias: polar residues. The segment at 1 to 33 (MSKNKLSKGQQRRVNANHQRRLKTSKEKPDYDD) is disordered. The region spanning 104–273 (TSVLTRPDFY…VIDSPGVREF (170 aa)) is the CP-type G domain. Residues 160 to 163 (NKID) and 214 to 222 (GQSGVGKSS) contribute to the GTP site. Positions 297, 302, 304, and 310 each coordinate Zn(2+).

Belongs to the TRAFAC class YlqF/YawG GTPase family. RsgA subfamily. Monomer. Associates with 30S ribosomal subunit, binds 16S rRNA. Zn(2+) is required as a cofactor.

The protein resides in the cytoplasm. Functionally, one of several proteins that assist in the late maturation steps of the functional core of the 30S ribosomal subunit. Helps release RbfA from mature subunits. May play a role in the assembly of ribosomal proteins into the subunit. Circularly permuted GTPase that catalyzes slow GTP hydrolysis, GTPase activity is stimulated by the 30S ribosomal subunit. This Escherichia fergusonii (strain ATCC 35469 / DSM 13698 / CCUG 18766 / IAM 14443 / JCM 21226 / LMG 7866 / NBRC 102419 / NCTC 12128 / CDC 0568-73) protein is Small ribosomal subunit biogenesis GTPase RsgA.